An 865-amino-acid chain; its full sequence is Alanine--tRNA ligase (865 aa).

Zn(2+) contacts are provided by His-552, His-556, Cys-654, and His-658.

This sequence belongs to the class-II aminoacyl-tRNA synthetase family. The cofactor is Zn(2+).

Its subcellular location is the cytoplasm. The catalysed reaction is tRNA(Ala) + L-alanine + ATP = L-alanyl-tRNA(Ala) + AMP + diphosphate. Catalyzes the attachment of alanine to tRNA(Ala) in a two-step reaction: alanine is first activated by ATP to form Ala-AMP and then transferred to the acceptor end of tRNA(Ala). Also edits incorrectly charged Ser-tRNA(Ala) and Gly-tRNA(Ala) via its editing domain. This chain is Alanine--tRNA ligase, found in Coxiella burnetii (strain Dugway 5J108-111).